The chain runs to 166 residues: Kelch repeat protein B10 (166 aa).

2 Kelch repeats span residues 25–76 (TIFV…STFG) and 77–129 (MLYF…KLNN).

Belongs to the poxviruses Kelch family.

This chain is Kelch repeat protein B10, found in Oryctolagus cuniculus (Rabbit).